Consider the following 766-residue polypeptide: TRP-like ion channel protein flc1 (766 aa).

A signal peptide spans 1 to 24; it reads MRIPLFILTFLFTFFSLATTPVSA. Over 25 to 170 the chain is Lumenal; it reads DSGVLYTDAV…ANGKTAHQKG (146 aa). Residues Asn-56, Asn-73, Asn-89, and Asn-109 are each glycosylated (N-linked (GlcNAc...) asparagine). Residues 171–191 traverse the membrane as a helical segment; that stretch reads VIWASAIFTLVAFLVAIWHTA. The Cytoplasmic segment spans residues 192-205; the sequence is SGTSTSPIQYRWFD. The chain crosses the membrane as a helical span at residues 206-226; the sequence is ILFIFQVAAASGLLHLNYPLV. Residues 227-351 are Lumenal-facing; it reads YTNFVQNFHW…RIPEANAYDT (125 aa). N-linked (GlcNAc...) asparagine glycosylation is present at Asn-325. The chain crosses the membrane as a helical span at residues 352 to 372; it reads IWFVFLALIGIFIAFHVLLFG. Residues 373–407 are Cytoplasmic-facing; sequence MVLLFDRMGRNRSHLGWAARLRRMWWPFCVGNSLR. Residues 408-428 traverse the membrane as a helical segment; sequence LCLIGFFPIWIFAFWQFHIGD. Residues 429–432 lie on the Lumenal side of the membrane; the sequence is SGLS. A helical membrane pass occupies residues 433-453; it reads IFWAVFGILLTLVPLATAFLL. At 454–493 the chain is on the cytoplasmic side; that stretch reads SLLRARRISSTSPEINSLYTSFRYFHSIGVLYRQYRQKFH. Residues 494–514 form a helical membrane-spanning segment; that stretch reads YFWFTPFVLAMIARAGFIAFG. Topologically, residues 515 to 517 are lumenal; that stretch reads PAS. A helical membrane pass occupies residues 518 to 538; the sequence is AWAQVIGNLVVEFIVLVALLA. The Cytoplasmic portion of the chain corresponds to 539 to 548; it reads CRPHKDKKGD. The chain crosses the membrane as a helical span at residues 549–569; that stretch reads WLGAFLSICRLIAIGLLIAFI. The Lumenal portion of the chain corresponds to 570–580; that stretch reads PDMNVKPIPRA. A helical membrane pass occupies residues 581–601; sequence VIAFVIIVFYGVPVVFLFVGF. Residues 602–766 lie on the Cytoplasmic side of the membrane; sequence LWNIGYGYLW…TDEKQWSRRY (165 aa). The interval 704 to 766 is disordered; it reads ASSADGALSP…TDEKQWSRRY (63 aa). Basic and acidic residues predominate over residues 757–766; the sequence is TDEKQWSRRY.

Belongs to the transient receptor potential (TRP) ion channel family.

The protein resides in the endoplasmic reticulum membrane. Its function is as follows. Endoplasmic reticulum membrane flavin carrier protein that plays a crucial role in Ca(2+) signaling/homeostasis via the modulation of the calcineurin-Crz1 stress response pathway which is important for both stress responses and virulence. This chain is TRP-like ion channel protein flc1, found in Cryptococcus neoformans var. grubii serotype A (strain H99 / ATCC 208821 / CBS 10515 / FGSC 9487) (Filobasidiella neoformans var. grubii).